We begin with the raw amino-acid sequence, 552 residues long: Cytochrome P450 monooxyhenase eriI (552 aa).

The helical transmembrane segment at 9–26 threads the bilayer; the sequence is FALKASAAVAVLLLAAWV. N-linked (GlcNAc...) asparagine glycans are attached at residues asparagine 50 and asparagine 447. Cysteine 495 provides a ligand contact to heme.

It belongs to the cytochrome P450 family. Requires heme as cofactor.

It is found in the membrane. The enzyme catalyses (-)-cyatha-3,12-diene + reduced [NADPH--hemoprotein reductase] + O2 = erinacol + oxidized [NADPH--hemoprotein reductase] + H2O + H(+). Its pathway is secondary metabolite biosynthesis. Its function is as follows. Cytochrome P450 monooxygenase; part of the gene cluster that mediates the biosynthesis of erinacines, cyathane-xylosides that show unique biological activities, including leishmanicidal activity, stimulating activity for nerve growth-factor synthesis, and agonistic activity toward the kappa opioid receptor. Within the pathway, eriI hydroxylates cyatha-3,12-diene at C-14 of the seven-membered ring to yield erinacol. The first step of the erinacines biosynthesis pathway is catalyzed by the geranylgeranyl diphosphate (GGPP) synthase eriE via conversion of farnesyl pyrophosphate and isopentyl pyrophosphate into geranylgeranyl pyrophosphate (GGPP). GGPP is then substrate of the diterpene cyclase eriG for the production of cyatha-3,12-diene. The cytochrome P450 monooxygenase eriI then hydroxylates cyatha-3,12-diene at C-14 of the seven-membered ring to produce erinacol, which is further hydroxylated at C-15 by the cytochrome P450 monooxygenase eriC to yield cyathadiol. The cytochrome P450 monooxygenase eriA then catalyzes C-11 hydroxylation in the presence of the short chain dehydrogenase/reductase (SDR) eriH, which leads to the production of cyathatriol. The acetyltransferase eriL converts cyathatriol into 11-O-acetyl-cyathatriol. The SDR eriH catalyzes further oxidation of 11-O-acetyl-cyathatriol into 1-O-acetylcyathin A3. Finally, the glycosyl transferase eriJ tranfers xylose from UDP-xylose onto C-14 of 11-O-acetyl-cyathatriol to form eracine Q. EriJ is also able to convert 11-O-acetyl-cyathatriol to eracine Q2 by using UDP-D-glucose as cosubstrate, but at a lower rate. Cytochrome P450 monooxygenase; part of the gene cluster that mediates the biosynthesis of erinacines, cyathane-xylosides that show unique biological activities, including leishmanicidal activity, stimulating activity for nerve growth-factor synthesis, and agonistic activity toward the kappa opioid receptor. The geranylgeranyl diphosphate (GGPP) synthase eriE catalyzes the first step in erinacines biosynthesis via conversion of farnesyl pyrophosphate and isopentyl pyrophosphate into geranylgeranyl pyrophosphate (GGPP). GGPP is then substrate of the diterpene cyclase eriG for the production of cyatha-3,12-diene. EriG is unable to use geranyl diphosphate (GPP) or farnesyl diphosphate (FPP) as substrates. The cytochrome P450 monooxygenase eriI then hydroxylates cyatha-3,12-diene at C-14 of the seven-membered ring to produce erinacol, which is further hydroxylated at C-15 by the cytochrome P450 monooxygenase eriC to yield cyathadiol. The cytochrome P450 monooxygenase eriA then catalyzes C-11 hydroxylation in the presence of the short chain dehydrogenase/reductase (SDR) eriH, which leads to the production of cyathatriol. The acetyltransferase eriL converts cyathatriol into 11-O-acetyl-cyathatriol. The SDR eriH catalyzes further oxidation of 11-O-acetyl-cyathatriol into 1-O-acetylcyathin A3. Finally, the glycosyl transferase eriJ tranfers xylose from UDP-xylose onto C-14 of 11-O-acetyl-cyathatriol to form eracine Q. EriJ is also able to convert 11-O-acetyl-cyathatriol to eracine Q2 by using UDP-D-glucose as cosubstrate, but at a lower rate. In the absence of eriL and eriJ, the SDR eriH is able to convert cyathatriol to cyathin A3; this is likely a switching mechanism in the biosynthesis of cyathins (C-14 ketogroup)and erinacines (C-14 glycosylated group). The roles of the SDR eriB, the polyprenyl transferase eriF and the dehydrogenase eriK have still to be identified. This is Cytochrome P450 monooxyhenase eriI from Hericium erinaceus (Lion's mane mushroom).